The following is a 240-amino-acid chain: Ribosomal RNA large subunit methyltransferase E (240 aa).

The interval methionine 1 to glutamine 28 is disordered. Glycine 80, tryptophan 82, aspartate 103, aspartate 119, and aspartate 143 together coordinate S-adenosyl-L-methionine. Lysine 183 (proton acceptor) is an active-site residue.

Belongs to the class I-like SAM-binding methyltransferase superfamily. RNA methyltransferase RlmE family.

It localises to the cytoplasm. It catalyses the reaction uridine(2552) in 23S rRNA + S-adenosyl-L-methionine = 2'-O-methyluridine(2552) in 23S rRNA + S-adenosyl-L-homocysteine + H(+). Functionally, specifically methylates the uridine in position 2552 of 23S rRNA at the 2'-O position of the ribose in the fully assembled 50S ribosomal subunit. This chain is Ribosomal RNA large subunit methyltransferase E, found in Azorhizobium caulinodans (strain ATCC 43989 / DSM 5975 / JCM 20966 / LMG 6465 / NBRC 14845 / NCIMB 13405 / ORS 571).